Consider the following 219-residue polypeptide: Mediator of RNA polymerase II transcription subunit 7 (219 aa).

The interval 173–203 (LPDPAESDRLNSTVEPMDTGDDGEAGKSRGE) is disordered.

This sequence belongs to the Mediator complex subunit 7 family. In terms of assembly, component of the Mediator complex.

It localises to the nucleus. Functionally, component of the Mediator complex, a coactivator involved in the regulated transcription of nearly all RNA polymerase II-dependent genes. Mediator functions as a bridge to convey information from gene-specific regulatory proteins to the basal RNA polymerase II transcription machinery. Mediator is recruited to promoters by direct interactions with regulatory proteins and serves as a scaffold for the assembly of a functional preinitiation complex with RNA polymerase II and the general transcription factors. The polypeptide is Mediator of RNA polymerase II transcription subunit 7 (MED7) (Aedes aegypti (Yellowfever mosquito)).